A 735-amino-acid polypeptide reads, in one-letter code: Photosystem I P700 chlorophyll a apoprotein A2 (735 aa).

8 consecutive transmembrane segments (helical) span residues 46–69 (IFAS…FHVA), 135–158 (LYTG…LHLQ), 175–199 (LNHH…HVAI), 274–292 (IAHH…GHMY), 331–354 (IHFQ…QHMY), 370–396 (AALY…IFFI), 418–440 (AIIS…PYVH), and 518–536 (FLVH…LILV). [4Fe-4S] cluster-binding residues include Cys560 and Cys569. 2 helical membrane passes run 576–597 (AFYL…YWHW) and 644–666 (LSVW…MFLI). Residues His655, Met663, and Tyr671 each contribute to the chlorophyll a site. Trp672 is a binding site for phylloquinone. A helical membrane pass occupies residues 708 to 728 (LVGLAHFSVGYIFTYAAFLIA).

Belongs to the PsaA/PsaB family. In terms of assembly, the PsaA/B heterodimer binds the P700 chlorophyll special pair and subsequent electron acceptors. PSI consists of a core antenna complex that captures photons, and an electron transfer chain that converts photonic excitation into a charge separation. The eukaryotic PSI reaction center is composed of at least 11 subunits. P700 is a chlorophyll a/chlorophyll a' dimer, A0 is one or more chlorophyll a, A1 is one or both phylloquinones and FX is a shared 4Fe-4S iron-sulfur center. is required as a cofactor.

It is found in the plastid. The protein resides in the chloroplast thylakoid membrane. The enzyme catalyses reduced [plastocyanin] + hnu + oxidized [2Fe-2S]-[ferredoxin] = oxidized [plastocyanin] + reduced [2Fe-2S]-[ferredoxin]. In terms of biological role, psaA and PsaB bind P700, the primary electron donor of photosystem I (PSI), as well as the electron acceptors A0, A1 and FX. PSI is a plastocyanin-ferredoxin oxidoreductase, converting photonic excitation into a charge separation, which transfers an electron from the donor P700 chlorophyll pair to the spectroscopically characterized acceptors A0, A1, FX, FA and FB in turn. Oxidized P700 is reduced on the lumenal side of the thylakoid membrane by plastocyanin. This is Photosystem I P700 chlorophyll a apoprotein A2 from Zea mays (Maize).